Here is a 72-residue protein sequence, read N- to C-terminus: Translation initiation factor IF-1 1 (72 aa).

Positions 1-72 (MAKEDRIEMQ…SRARIIFRAK (72 aa)) constitute an S1-like domain.

Belongs to the IF-1 family. As to quaternary structure, component of the 30S ribosomal translation pre-initiation complex which assembles on the 30S ribosome in the order IF-2 and IF-3, IF-1 and N-formylmethionyl-tRNA(fMet); mRNA recruitment can occur at any time during PIC assembly.

Its subcellular location is the cytoplasm. One of the essential components for the initiation of protein synthesis. Stabilizes the binding of IF-2 and IF-3 on the 30S subunit to which N-formylmethionyl-tRNA(fMet) subsequently binds. Helps modulate mRNA selection, yielding the 30S pre-initiation complex (PIC). Upon addition of the 50S ribosomal subunit IF-1, IF-2 and IF-3 are released leaving the mature 70S translation initiation complex. In Methylobacillus flagellatus (strain ATCC 51484 / DSM 6875 / VKM B-1610 / KT), this protein is Translation initiation factor IF-1 1.